The primary structure comprises 101 residues: Small ribosomal subunit protein bS18c (101 aa).

Belongs to the bacterial ribosomal protein bS18 family. As to quaternary structure, part of the 30S ribosomal subunit.

Its subcellular location is the plastid. The protein localises to the chloroplast. The protein is Small ribosomal subunit protein bS18c of Lactuca sativa (Garden lettuce).